Here is a 354-residue protein sequence, read N- to C-terminus: Rhodopsin (354 aa).

Residues Met-1–Met-36 lie on the Extracellular side of the membrane. Residues Asn-2 and Asn-15 are each glycosylated (N-linked (GlcNAc...) asparagine). The helical transmembrane segment at Phe-37–Val-61 threads the bilayer. The Cytoplasmic portion of the chain corresponds to Thr-62 to Asn-73. A helical transmembrane segment spans residues Tyr-74–Ile-96. Over Thr-97–Cys-110 the chain is Extracellular. Cys-110 and Cys-187 are disulfide-bonded. The chain crosses the membrane as a helical span at residues Asn-111–Ile-133. The short motif at Glu-134–Tyr-136 is the 'Ionic lock' involved in activated form stabilization element. The Cytoplasmic segment spans residues Glu-134–His-152. A helical membrane pass occupies residues Ala-153 to Val-173. At Gly-174–Ser-202 the chain is on the extracellular side. A helical membrane pass occupies residues Phe-203 to Gly-224. Topologically, residues Arg-225–Arg-252 are cytoplasmic. Residues Met-253–Tyr-274 traverse the membrane as a helical segment. At Ile-275–Phe-286 the chain is on the extracellular side. Residues Phe-287 to Leu-308 traverse the membrane as a helical segment. Residue Lys-296 is modified to N6-(retinylidene)lysine. At Met-309–Ala-354 the chain is on the cytoplasmic side. Cys-322 is lipidated: S-palmitoyl cysteine. Residues Ser-333–Ala-354 form a disordered region. A compositionally biased stretch (low complexity) spans Thr-334 to Ala-354.

The protein belongs to the G-protein coupled receptor 1 family. Opsin subfamily. Phosphorylated on some or all of the serine and threonine residues present in the C-terminal region. Post-translationally, contains one covalently linked retinal chromophore.

Its subcellular location is the membrane. The protein localises to the cell projection. It is found in the cilium. The protein resides in the photoreceptor outer segment. Functionally, photoreceptor required for image-forming vision at low light intensity. While most salt water fish species use retinal as chromophore, most freshwater fish use 3-dehydroretinal, or a mixture of retinal and 3-dehydroretinal. Light-induced isomerization of 11-cis to all-trans retinal triggers a conformational change that activates signaling via G-proteins. Subsequent receptor phosphorylation mediates displacement of the bound G-protein alpha subunit by arrestin and terminates signaling. This is Rhodopsin (rho) from Leucoraja erinaceus (Little skate).